A 270-amino-acid chain; its full sequence is Endochitinase PR4 (270 aa).

The signal sequence occupies residues 1-23; the sequence is MGNKLVLVLVAVALVMGPKNVSA. The Chitin-binding type-1 domain maps to 24-58; it reads QNCGCAEGLCCSQYGYCGTGEDYCGTGCQQGPCTT. 7 disulfides stabilise this stretch: cysteine 26-cysteine 34, cysteine 28-cysteine 40, cysteine 33-cysteine 47, cysteine 51-cysteine 56, cysteine 88-cysteine 137, cysteine 150-cysteine 160, and cysteine 238-cysteine 270. Glutamate 132 functions as the Proton donor in the catalytic mechanism.

This sequence belongs to the glycosyl hydrolase 19 family. Chitinase class I subfamily.

The catalysed reaction is Random endo-hydrolysis of N-acetyl-beta-D-glucosaminide (1-&gt;4)-beta-linkages in chitin and chitodextrins.. Defense against chitin-containing fungal pathogens. The polypeptide is Endochitinase PR4 (CHI4) (Phaseolus vulgaris (Kidney bean)).